The following is a 317-amino-acid chain: Sulfate adenylyltransferase subunit 2 (317 aa).

Disordered stretches follow at residues 1 to 21 (MPDSRPDTELSNPQSAKAPLD) and 298 to 317 (RAIDRDQSGSMEKKKREGYF).

It belongs to the PAPS reductase family. CysD subfamily. Heterodimer composed of CysD, the smaller subunit, and CysN.

The catalysed reaction is sulfate + ATP + H(+) = adenosine 5'-phosphosulfate + diphosphate. It functions in the pathway sulfur metabolism; hydrogen sulfide biosynthesis; sulfite from sulfate: step 1/3. Functionally, with CysN forms the ATP sulfurylase (ATPS) that catalyzes the adenylation of sulfate producing adenosine 5'-phosphosulfate (APS) and diphosphate, the first enzymatic step in sulfur assimilation pathway. APS synthesis involves the formation of a high-energy phosphoric-sulfuric acid anhydride bond driven by GTP hydrolysis by CysN coupled to ATP hydrolysis by CysD. The polypeptide is Sulfate adenylyltransferase subunit 2 (Rhizobium etli (strain CIAT 652)).